We begin with the raw amino-acid sequence, 284 residues long: MEMO1 family protein MmarC6_1286 (284 aa).

Belongs to the MEMO1 family.

This chain is MEMO1 family protein MmarC6_1286, found in Methanococcus maripaludis (strain C6 / ATCC BAA-1332).